A 544-amino-acid polypeptide reads, in one-letter code: CTP synthase (544 aa).

Positions 1–266 (MTKFIFVTGG…DDLICERFGL (266 aa)) are amidoligase domain. Residue serine 13 coordinates CTP. Serine 13 contributes to the UTP binding site. Residues 14 to 19 (SLGKGI) and aspartate 71 contribute to the ATP site. Mg(2+) contacts are provided by aspartate 71 and glutamate 140. CTP contacts are provided by residues 147–149 (DIE), 187–192 (KTKPTQ), and lysine 223. UTP contacts are provided by residues 187–192 (KTKPTQ) and lysine 223. Residues 291 to 543 (TVAMVGKYVE…VKAAKNYSEA (253 aa)) enclose the Glutamine amidotransferase type-1 domain. Glycine 354 provides a ligand contact to L-glutamine. The Nucleophile; for glutamine hydrolysis role is filled by cysteine 381. L-glutamine is bound by residues 382–385 (LGMQ), glutamate 404, and arginine 471. Residues histidine 516 and glutamate 518 contribute to the active site.

This sequence belongs to the CTP synthase family. Homotetramer.

It catalyses the reaction UTP + L-glutamine + ATP + H2O = CTP + L-glutamate + ADP + phosphate + 2 H(+). It carries out the reaction L-glutamine + H2O = L-glutamate + NH4(+). The catalysed reaction is UTP + NH4(+) + ATP = CTP + ADP + phosphate + 2 H(+). Its pathway is pyrimidine metabolism; CTP biosynthesis via de novo pathway; CTP from UDP: step 2/2. With respect to regulation, allosterically activated by GTP, when glutamine is the substrate; GTP has no effect on the reaction when ammonia is the substrate. The allosteric effector GTP functions by stabilizing the protein conformation that binds the tetrahedral intermediate(s) formed during glutamine hydrolysis. Inhibited by the product CTP, via allosteric rather than competitive inhibition. In terms of biological role, catalyzes the ATP-dependent amination of UTP to CTP with either L-glutamine or ammonia as the source of nitrogen. Regulates intracellular CTP levels through interactions with the four ribonucleotide triphosphates. This Psychrobacter cryohalolentis (strain ATCC BAA-1226 / DSM 17306 / VKM B-2378 / K5) protein is CTP synthase.